Here is a 144-residue protein sequence, read N- to C-terminus: Large ribosomal subunit protein uL13 (144 aa).

The protein belongs to the universal ribosomal protein uL13 family. Part of the 50S ribosomal subunit.

In terms of biological role, this protein is one of the early assembly proteins of the 50S ribosomal subunit, although it is not seen to bind rRNA by itself. It is important during the early stages of 50S assembly. The protein is Large ribosomal subunit protein uL13 of Mycoplasma mobile (strain ATCC 43663 / 163K / NCTC 11711) (Mesomycoplasma mobile).